The following is a 137-amino-acid chain: Large ribosomal subunit protein uL16 (137 aa).

Belongs to the universal ribosomal protein uL16 family. In terms of assembly, part of the 50S ribosomal subunit.

Binds 23S rRNA and is also seen to make contacts with the A and possibly P site tRNAs. In Methylobacterium sp. (strain 4-46), this protein is Large ribosomal subunit protein uL16.